Consider the following 568-residue polypeptide: MTLRLSRRAYAEMFGPTTGDRIRLADTELLIEVERDHTLYGEEVKFGGGKVIRDGMGQSQLPAADVADTVITNAVILDHWGIVKADIAIKHGRIAAIGKAGNPDIQPGVTIAIGAATEIIAGEGLIVTAGGIDTHIHFISPQQIDEALASGVTTMIGGGTGPATGTNATTCTPGPWHMERMLQAADGWPINLGFLGKGNASRPQPLVEQIEAGAIGLKLHEDWGTTPAAIDNCLTVADDTDTQVAIHTDTLNEAGFVEATVAAFKGRTIHTYHTEGAGGGHAPDILKVCGEANVLPSSTNPTRPYTINTLDEHLDMLMVCHHLDPSIAEDLAFAESRIRRETIAAEDILHDLGALSMLSSDSQAMGRVGEVIIRTWQTAHKMKVQRGALTGDGARNDNFRAKRYVAKYTINPALTHGIAHEVGSIEPGKWADLVLWEPAFFGVKPAMIVKGGMIAVAQMGDPNASIPTPQPVHYREMFATRGGALARTSLTFVSQLALDAGISARYGLAKRLVPVRGCRTVTKRDMIHNAWQPAIRVDPETYDVVADGALLTCEPAAVLPMAQRYFLF.

The Urease domain maps to 130 to 568 (GGIDTHIHFI…LPMAQRYFLF (439 aa)). The Ni(2+) site is built by His135, His137, and Lys218. At Lys218 the chain carries N6-carboxylysine. His220 provides a ligand contact to substrate. Ni(2+) contacts are provided by His247 and His273. Catalysis depends on His321, which acts as the Proton donor. Asp361 serves as a coordination point for Ni(2+).

Belongs to the metallo-dependent hydrolases superfamily. Urease alpha subunit family. As to quaternary structure, heterotrimer of UreA (gamma), UreB (beta) and UreC (alpha) subunits. Three heterotrimers associate to form the active enzyme. Ni cation serves as cofactor. Carboxylation allows a single lysine to coordinate two nickel ions.

Its subcellular location is the cytoplasm. It catalyses the reaction urea + 2 H2O + H(+) = hydrogencarbonate + 2 NH4(+). The protein operates within nitrogen metabolism; urea degradation; CO(2) and NH(3) from urea (urease route): step 1/1. The protein is Urease subunit alpha of Burkholderia pseudomallei (strain 1106a).